Here is a 590-residue protein sequence, read N- to C-terminus: Polypeptide N-acetylgalactosaminyltransferase 8 (590 aa).

At 1–11 (MCLDIWRHKKK) the chain is on the cytoplasmic side. Residues 12–31 (VLPLLLLMAIGSIIYYLYTL) form a helical; Signal-anchor for type II membrane protein membrane-spanning segment. Residues 32 to 590 (KLEGERDESA…QHFWDNVKTQ (559 aa)) lie on the Lumenal side of the membrane. The N-linked (GlcNAc...) asparagine glycan is linked to asparagine 77. Cystine bridges form between cysteine 117-cysteine 345, cysteine 336-cysteine 419, cysteine 459-cysteine 475, cysteine 502-cysteine 517, and cysteine 546-cysteine 561. Residues 127-236 (LPSVSVVITY…KGWLEPLIAP (110 aa)) form a catalytic subdomain A region. Aspartate 168 contributes to the substrate binding site. Aspartate 220 is a binding site for Mn(2+). Residue serine 221 coordinates substrate. Position 222 (histidine 222) interacts with Mn(2+). An N-linked (GlcNAc...) asparagine glycan is attached at asparagine 241. Residues 291-353 (PHKNPIMNGG…PCSRVGHLFR (63 aa)) are catalytic subdomain B. Tryptophan 322 contacts substrate. Residue histidine 350 participates in Mn(2+) binding. Residue arginine 353 participates in substrate binding. A Ricin B-type lectin domain is found at 446-573 (ASGVLQSISS…KNHKQQWKFG (128 aa)).

This sequence belongs to the glycosyltransferase 2 family. GalNAc-T subfamily. Mn(2+) serves as cofactor. Expressed in developing oocytes and egg chambers. During embryonic stages 9-11, expressed in the primordium of the foregut, midgut and hindgut. During embryonic stages 12-13, expressed in the posterior midgut and hindgut. During embryonic stages 14-15, expression continues in the hindgut. No expression detected during embryonic stages 16-17 or in third instar larvae imaginal disks.

It localises to the golgi apparatus membrane. It carries out the reaction L-seryl-[protein] + UDP-N-acetyl-alpha-D-galactosamine = a 3-O-[N-acetyl-alpha-D-galactosaminyl]-L-seryl-[protein] + UDP + H(+). It catalyses the reaction L-threonyl-[protein] + UDP-N-acetyl-alpha-D-galactosamine = a 3-O-[N-acetyl-alpha-D-galactosaminyl]-L-threonyl-[protein] + UDP + H(+). It functions in the pathway protein modification; protein glycosylation. Its function is as follows. Catalyzes the initial reaction in O-linked oligosaccharide biosynthesis, the transfer of an N-acetyl-D-galactosamine residue to a serine or threonine residue on the protein receptor. It can both act as a peptide transferase that transfers GalNAc onto unmodified peptide substrates, and as a glycopeptide transferase that requires the prior addition of a GalNAc on a peptide before adding additional GalNAc moieties. Prefers both EA2 and the diglycosylated Muc5AC-3/13 as substrates, albeit at very low levels fro Muc5AC-3/13. This is Polypeptide N-acetylgalactosaminyltransferase 8 from Drosophila melanogaster (Fruit fly).